Reading from the N-terminus, the 494-residue chain is Cytochrome c-552 (494 aa).

An N-terminal signal peptide occupies residues 1–31; it reads MEKKLKSWQGWLLFGGTMVVVFVLGMIAASV. H116 serves as a coordination point for heme c. The heme site is built by C144, C147, and K148. Residues C182, C185, H186, C224, C227, and H228 each contribute to the heme c site. The Ca(2+) site is built by E230, Y231, K276, and Q278. Y231 is a binding site for substrate. Residue H279 participates in substrate binding. The heme c site is built by H290, C297, C300, H301, H315, C328, C331, H332, and H407.

This sequence belongs to the cytochrome c-552 family. Ca(2+) is required as a cofactor. Requires heme c as cofactor.

Its subcellular location is the periplasm. It carries out the reaction 6 Fe(III)-[cytochrome c] + NH4(+) + 2 H2O = 6 Fe(II)-[cytochrome c] + nitrite + 8 H(+). It functions in the pathway nitrogen metabolism; nitrate reduction (assimilation). Catalyzes the reduction of nitrite to ammonia, consuming six electrons in the process. This chain is Cytochrome c-552, found in Parabacteroides distasonis (strain ATCC 8503 / DSM 20701 / CIP 104284 / JCM 5825 / NCTC 11152).